The sequence spans 290 residues: 33 kDa chaperonin (290 aa).

Intrachain disulfides connect Cys234-Cys236 and Cys267-Cys270.

It belongs to the HSP33 family. Under oxidizing conditions two disulfide bonds are formed involving the reactive cysteines. Under reducing conditions zinc is bound to the reactive cysteines and the protein is inactive.

The protein resides in the cytoplasm. In terms of biological role, redox regulated molecular chaperone. Protects both thermally unfolding and oxidatively damaged proteins from irreversible aggregation. Plays an important role in the bacterial defense system toward oxidative stress. In Colwellia psychrerythraea (strain 34H / ATCC BAA-681) (Vibrio psychroerythus), this protein is 33 kDa chaperonin.